We begin with the raw amino-acid sequence, 74 residues long: Small ribosomal subunit protein bS20c (74 aa).

The protein belongs to the bacterial ribosomal protein bS20 family.

The protein resides in the plastid. It is found in the chloroplast. Binds directly to 16S ribosomal RNA. This Cyanidioschyzon merolae (strain NIES-3377 / 10D) (Unicellular red alga) protein is Small ribosomal subunit protein bS20c.